The sequence spans 187 residues: PRA1 family protein G1 (187 aa).

3 helical membrane-spanning segments follow: residues 84–104 (LFLI…AMWL), 125–145 (VIVF…NSLQ), and 146–166 (CLIL…IIRN).

It belongs to the PRA1 family. In terms of tissue distribution, expressed in roots and lateral roots.

It is found in the endosome membrane. In terms of biological role, may be involved in both secretory and endocytic intracellular trafficking in the endosomal/prevacuolar compartments. The sequence is that of PRA1 family protein G1 (PRA1G1) from Arabidopsis thaliana (Mouse-ear cress).